The primary structure comprises 372 residues: tRNA-specific 2-thiouridylase MnmA (372 aa).

ATP contacts are provided by residues Gly-13–Ser-20 and Met-39. The segment at Asn-99–Asp-101 is interaction with target base in tRNA. Cys-104 acts as the Nucleophile in catalysis. A disulfide bridge connects residues Cys-104 and Cys-200. An ATP-binding site is contributed by Gly-128. Residues Lys-150 to Gln-152 are interaction with tRNA. Cys-200 acts as the Cysteine persulfide intermediate in catalysis. An interaction with tRNA region spans residues Arg-310–Tyr-311.

This sequence belongs to the MnmA/TRMU family.

The protein localises to the cytoplasm. The enzyme catalyses S-sulfanyl-L-cysteinyl-[protein] + uridine(34) in tRNA + AH2 + ATP = 2-thiouridine(34) in tRNA + L-cysteinyl-[protein] + A + AMP + diphosphate + H(+). In terms of biological role, catalyzes the 2-thiolation of uridine at the wobble position (U34) of tRNA, leading to the formation of s(2)U34. This chain is tRNA-specific 2-thiouridylase MnmA, found in Bacillus licheniformis (strain ATCC 14580 / DSM 13 / JCM 2505 / CCUG 7422 / NBRC 12200 / NCIMB 9375 / NCTC 10341 / NRRL NRS-1264 / Gibson 46).